We begin with the raw amino-acid sequence, 57 residues long: UPF0391 membrane protein bsl6560 (57 aa).

Helical transmembrane passes span 4 to 24 (WVVT…GGIA) and 30 to 50 (IAKI…VVGL).

It belongs to the UPF0391 family.

The protein resides in the cell membrane. In Bradyrhizobium diazoefficiens (strain JCM 10833 / BCRC 13528 / IAM 13628 / NBRC 14792 / USDA 110), this protein is UPF0391 membrane protein bsl6560.